We begin with the raw amino-acid sequence, 315 residues long: MSDSLRIVFAGTPDFAARHLEALLMSQHEVVGVLTRPDKPAGRGKKLTPSPVKVLAEERNITVFQPATLRSEENQQWVLKQQPDVLIVVAYGLILPKVVLNIPELGCLNVHGSLLPRWRGAAPIQRSLWAGDTETGVTIMQMDIGLDTGDMLYKARCPITPEDTSASLYEKLANIGPDALLKTLSLITSGKSQPETQNENLVTYAEKLSKEEARINWELSATHLERCIRAFNPWPMSFFEMEGQPIKVWKAEAIEEQTSVEPGTVLKADKEGIYIATADGILNITQLQPAGKKAMSAANLLNSKREWFTPGNKIN.

A (6S)-5,6,7,8-tetrahydrofolate-binding site is contributed by 113-116 (SLLP).

It belongs to the Fmt family.

It catalyses the reaction L-methionyl-tRNA(fMet) + (6R)-10-formyltetrahydrofolate = N-formyl-L-methionyl-tRNA(fMet) + (6S)-5,6,7,8-tetrahydrofolate + H(+). Its function is as follows. Attaches a formyl group to the free amino group of methionyl-tRNA(fMet). The formyl group appears to play a dual role in the initiator identity of N-formylmethionyl-tRNA by promoting its recognition by IF2 and preventing the misappropriation of this tRNA by the elongation apparatus. This Photorhabdus laumondii subsp. laumondii (strain DSM 15139 / CIP 105565 / TT01) (Photorhabdus luminescens subsp. laumondii) protein is Methionyl-tRNA formyltransferase.